The sequence spans 420 residues: ATP phosphoribosyltransferase regulatory subunit (420 aa).

Belongs to the class-II aminoacyl-tRNA synthetase family. HisZ subfamily. Heteromultimer composed of HisG and HisZ subunits.

It localises to the cytoplasm. It participates in amino-acid biosynthesis; L-histidine biosynthesis; L-histidine from 5-phospho-alpha-D-ribose 1-diphosphate: step 1/9. Its function is as follows. Required for the first step of histidine biosynthesis. May allow the feedback regulation of ATP phosphoribosyltransferase activity by histidine. This is ATP phosphoribosyltransferase regulatory subunit from Bacillus cereus (strain ATCC 14579 / DSM 31 / CCUG 7414 / JCM 2152 / NBRC 15305 / NCIMB 9373 / NCTC 2599 / NRRL B-3711).